The following is a 465-amino-acid chain: Argininosuccinate lyase (465 aa).

This sequence belongs to the lyase 1 family. Argininosuccinate lyase subfamily.

Its subcellular location is the cytoplasm. The catalysed reaction is 2-(N(omega)-L-arginino)succinate = fumarate + L-arginine. Its pathway is amino-acid biosynthesis; L-arginine biosynthesis; L-arginine from L-ornithine and carbamoyl phosphate: step 3/3. The sequence is that of Argininosuccinate lyase from Clostridium botulinum (strain Alaska E43 / Type E3).